An 808-amino-acid polypeptide reads, in one-letter code: Leucine--tRNA ligase (808 aa).

Positions 40-51 match the 'HIGH' region motif; that stretch reads PYPSGQGLHVGH. The 'KMSKS' region motif lies at 580–584; it reads KMSKS. Lys-583 contacts ATP.

The protein belongs to the class-I aminoacyl-tRNA synthetase family.

It is found in the cytoplasm. It catalyses the reaction tRNA(Leu) + L-leucine + ATP = L-leucyl-tRNA(Leu) + AMP + diphosphate. The sequence is that of Leucine--tRNA ligase from Leuconostoc mesenteroides subsp. mesenteroides (strain ATCC 8293 / DSM 20343 / BCRC 11652 / CCM 1803 / JCM 6124 / NCDO 523 / NBRC 100496 / NCIMB 8023 / NCTC 12954 / NRRL B-1118 / 37Y).